Consider the following 85-residue polypeptide: Putative regulatory protein THEYE_A0405 (85 aa).

Belongs to the RemA family.

In Thermodesulfovibrio yellowstonii (strain ATCC 51303 / DSM 11347 / YP87), this protein is Putative regulatory protein THEYE_A0405.